The sequence spans 312 residues: Olfactory receptor 10D3 (312 aa).

The Extracellular segment spans residues 1-26 (MEVKNCCMVTEFILLGIPHTEGLEMT). The helical transmembrane segment at 27–47 (LFVLFLPFYACTLLGNVSILV) threads the bilayer. Residues 48–57 (AVMSSARLHT) are Cytoplasmic-facing. A helical membrane pass occupies residues 58-78 (PMYFFLGNLSVFDMGFSSVTC). The Extracellular segment spans residues 79–97 (PKMLLYLMGLSRLISYKDC). C97 and C179 are disulfide-bonded. A helical membrane pass occupies residues 98–118 (VCQLFFFHFLGSIECFLFTVM). At 119-139 (AYDRFTAICYPLRYTVIMNPR) the chain is on the cytoplasmic side. A helical membrane pass occupies residues 140–160 (ICVALAVGTWLLGCIHSSILT). Over 161–197 (SLTFTLPYCGPNEVDHFFCDIPALLPLACADTSLAQR) the chain is Extracellular. The helical transmembrane segment at 198 to 218 (VSFTNVGLISLVCFLLILLSY) threads the bilayer. Residues 219–239 (TRITISILSIRTTEGRRRAFS) lie on the Cytoplasmic side of the membrane. A helical membrane pass occupies residues 240–260 (TCSAHLIAILCAYGPIITVYL). At 261–266 (QPTPNP) the chain is on the extracellular side. The helical transmembrane segment at 267 to 287 (MLGTVVQILMNLVGPMLNPLI) threads the bilayer. Topologically, residues 288 to 312 (YTLRNKEVKTALKTILHRTGHVPES) are cytoplasmic.

It belongs to the G-protein coupled receptor 1 family.

The protein localises to the cell membrane. Its function is as follows. Odorant receptor. The polypeptide is Olfactory receptor 10D3 (Homo sapiens (Human)).